Consider the following 130-residue polypeptide: Small ribosomal subunit protein uS11 (130 aa).

The protein belongs to the universal ribosomal protein uS11 family. In terms of assembly, part of the 30S ribosomal subunit. Interacts with proteins S7 and S18. Binds to IF-3.

Functionally, located on the platform of the 30S subunit, it bridges several disparate RNA helices of the 16S rRNA. Forms part of the Shine-Dalgarno cleft in the 70S ribosome. This chain is Small ribosomal subunit protein uS11, found in Syntrophobacter fumaroxidans (strain DSM 10017 / MPOB).